Here is a 138-residue protein sequence, read N- to C-terminus: uncharacterized protein (138 aa).

Disordered stretches follow at residues 1–23 and 35–83; these read MPES…MLSE and ASPS…EDPV. The span at 60 to 69 shows a compositional bias: acidic residues; sequence DEETIPEEDD.

This is an uncharacterized protein from Schizosaccharomyces pombe (strain 972 / ATCC 24843) (Fission yeast).